A 205-amino-acid chain; its full sequence is dITP/XTP pyrophosphatase (205 aa).

11–16 contributes to the substrate binding site; that stretch reads TKNMGK. 2 residues coordinate Mg(2+): Glu44 and Asp73. Asp73 functions as the Proton acceptor in the catalytic mechanism. Substrate is bound by residues Ser74, 158–161, Lys181, and 186–187; these read FGYD and HR.

It belongs to the HAM1 NTPase family. As to quaternary structure, homodimer. Mg(2+) serves as cofactor.

It carries out the reaction XTP + H2O = XMP + diphosphate + H(+). It catalyses the reaction dITP + H2O = dIMP + diphosphate + H(+). The enzyme catalyses ITP + H2O = IMP + diphosphate + H(+). Pyrophosphatase that catalyzes the hydrolysis of nucleoside triphosphates to their monophosphate derivatives, with a high preference for the non-canonical purine nucleotides XTP (xanthosine triphosphate), dITP (deoxyinosine triphosphate) and ITP. Seems to function as a house-cleaning enzyme that removes non-canonical purine nucleotides from the nucleotide pool, thus preventing their incorporation into DNA/RNA and avoiding chromosomal lesions. This Bacillus thuringiensis subsp. konkukian (strain 97-27) protein is dITP/XTP pyrophosphatase.